The sequence spans 142 residues: Large ribosomal subunit protein uL13 (142 aa).

Belongs to the universal ribosomal protein uL13 family. In terms of assembly, part of the 50S ribosomal subunit.

This protein is one of the early assembly proteins of the 50S ribosomal subunit, although it is not seen to bind rRNA by itself. It is important during the early stages of 50S assembly. This chain is Large ribosomal subunit protein uL13, found in Teredinibacter turnerae (strain ATCC 39867 / T7901).